A 409-amino-acid chain; its full sequence is Tryptophan synthase beta chain 1 (409 aa).

At lysine 104 the chain carries N6-(pyridoxal phosphate)lysine.

Belongs to the TrpB family. As to quaternary structure, tetramer of two alpha and two beta chains. Requires pyridoxal 5'-phosphate as cofactor.

The catalysed reaction is (1S,2R)-1-C-(indol-3-yl)glycerol 3-phosphate + L-serine = D-glyceraldehyde 3-phosphate + L-tryptophan + H2O. It functions in the pathway amino-acid biosynthesis; L-tryptophan biosynthesis; L-tryptophan from chorismate: step 5/5. In terms of biological role, the beta subunit is responsible for the synthesis of L-tryptophan from indole and L-serine. The protein is Tryptophan synthase beta chain 1 (trpB1) of Nostoc sp. (strain PCC 7120 / SAG 25.82 / UTEX 2576).